Consider the following 245-residue polypeptide: Probable phosphatase YcdX (245 aa).

The Zn(2+) site is built by His7, His9, His15, His40, Glu73, His101, His131, Asp192, and His194.

The protein belongs to the PHP family. As to quaternary structure, homotrimer. The cofactor is Zn(2+).

This is Probable phosphatase YcdX from Salmonella agona (strain SL483).